The sequence spans 521 residues: uncharacterized protein (521 aa).

This is an uncharacterized protein from Magallana gigas (Pacific oyster).